Reading from the N-terminus, the 2431-residue chain is Histone-lysine N-methyltransferase trr (2431 aa).

Disordered regions lie at residues L34 to P78, D135 to G201, A213 to P235, and Q759 to N789. The span at Y142–F165 shows a compositional bias: polar residues. Composition is skewed to low complexity over residues A171–S183, S218–P235, and A767–P787. An LXXLL motif 1 motif is present at residues L801–L805. Disordered regions lie at residues P863 to S895, V918 to Q973, H1226 to A1292, T1404 to S1433, and G1478 to M1500. 3 stretches are compositionally biased toward low complexity: residues T866–S895, Q952–Q970, and H1226–N1241. Positions R1269 to R1281 are enriched in basic residues. Residues P1410–S1422 show a composition bias toward low complexity. Residues S1423–S1433 are compositionally biased toward gly residues. Phosphothreonine is present on T1486. 2 positions are modified to phosphoserine: S1488 and S1490. An LXXLL motif 2 motif is present at residues L1652 to L1656. Residues G1790 to T1836 form a disordered region. The segment covering V1794–A1811 has biased composition (polar residues). Residues T1895–V1935 form a C2HC pre-PHD-type zinc finger. Residues Q1956 to G2003 form a PHD-type zinc finger. The LXXLL motif 3 motif lies at L2060–L2064. One can recognise an FYR N-terminal domain in the interval S2061–A2121. One can recognise an FYR C-terminal domain in the interval G2122–Y2209. An SET domain is found at N2291 to K2407. The Post-SET domain occupies H2415–N2431.

Belongs to the class V-like SAM-binding methyltransferase superfamily. Histone-lysine methyltransferase family. TRX/MLL subfamily. Component of the MLL3/4 complex composed at least of the catalytic subunit trr, ash2, Rbbp5, Dpy-30L1, wds, hcf, ptip, Pa1, Utx, Lpt and Ncoa6. Interacts with nuclear receptor EcR in an ecdysone-dependent manner. Interacts with ash2; the interaction stabilizes trr. In terms of tissue distribution, widely expressed.

It localises to the nucleus. The protein resides in the chromosome. It catalyses the reaction L-lysyl(4)-[histone H3] + 3 S-adenosyl-L-methionine = N(6),N(6),N(6)-trimethyl-L-lysyl(4)-[histone H3] + 3 S-adenosyl-L-homocysteine + 3 H(+). Histone methyltransferase that acts as a coactivator for the ecdysone receptor during development. Specifically trimethylates 'Lys-4' of histone H3, a specific tag for epigenetic transcriptional activation. Recruited by EcR in an ecdysone-dependent manner causing H3 'Lys-4' trimethylation at ecdysone-inducible promoters, leading to activate expression. Plays a central role in the developing compound eye, during the progression of the morphogenetic furrow and in post-furrow differentiation of the retinal epithelium, notably by activating expression of hh. Also required for wing and abdominal development. The polypeptide is Histone-lysine N-methyltransferase trr (trr) (Drosophila melanogaster (Fruit fly)).